The chain runs to 307 residues: Cyclin-dependent kinase 5 activator 1 (307 aa).

G2 is lipidated: N-myristoyl glycine. S8 is modified (phosphoserine; by CDK5). Residues T97–I133 form a disordered region. Pro residues predominate over residues Q100–P110. Residues S112–V125 show a composition bias toward polar residues. T138 is modified (phosphothreonine; by CDK5).

Belongs to the cyclin-dependent kinase 5 activator family. In terms of assembly, heterodimer composed of a catalytic subunit CDK5 and a regulatory subunit CDK5R1 (p25) and macromolecular complex composed of at least CDK5, CDK5R1 (p35) and CDK5RAP1 or CDK5RAP2 or CDK5RAP3. Only the heterodimer shows kinase activity. Interacts with EPHA4 and NGEF; may mediate the activation of NGEF by EPHA4. Interacts with RASGRF2. The complex p35/CDK5 interacts with CLOCK. Post-translationally, the p35 form is proteolytically cleaved by calpain, giving rise to the p25 form. P35 has a 5 to 10 fold shorter half-life compared to p25. The conversion results in deregulation of the CDK5 kinase: p25/CDK5 kinase displays an increased and altered tau phosphorylation in comparison to the p35/CDK5 kinase in vivo. Myristoylated. A proper myristoylation signal is essential for the proper distribution of p35. In terms of processing, phosphorylation at Ser-8 and Thr-138 by CDK5 prevents calpain-mediated proteolysis. Post-translationally, ubiquitinated, leading to its degradation: degradation of p35 by proteasome results in down-regulation of CDK5 activity. During this process, CDK5 phosphorylates p35 and induces its ubiquitination and subsequent degradation. Ubiquitinated by the CRL2(FEM1B) complex, which recognizes the -Gly-Leu-Asp-Arg C-degron at the C-terminus, leading to its degradation. In terms of tissue distribution, brain and neuron specific.

It localises to the cell membrane. It is found in the cell projection. The protein resides in the neuron projection. Its subcellular location is the nucleus. The protein localises to the cytoplasm. It localises to the perinuclear region. It is found in the perikaryon. In terms of biological role, p35 is a neuron specific activator of CDK5. The complex p35/CDK5 is required for neurite outgrowth and cortical lamination. Involved in dendritic spine morphogenesis by mediating the EFNA1-EPHA4 signaling. Activator of TPKII. The complex p35/CDK5 participates in the regulation of the circadian clock by modulating the function of CLOCK protein: phosphorylates CLOCK at 'Thr-451' and 'Thr-461' and regulates the transcriptional activity of the CLOCK-BMAL1 heterodimer in association with altered stability and subcellular distribution. The protein is Cyclin-dependent kinase 5 activator 1 (Cdk5r1) of Rattus norvegicus (Rat).